Reading from the N-terminus, the 145-residue chain is 3-hydroxyacyl-[acyl-carrier-protein] dehydratase FabZ (145 aa).

The active site involves His-48.

This sequence belongs to the thioester dehydratase family. FabZ subfamily.

The protein resides in the cytoplasm. It catalyses the reaction a (3R)-hydroxyacyl-[ACP] = a (2E)-enoyl-[ACP] + H2O. In terms of biological role, involved in unsaturated fatty acids biosynthesis. Catalyzes the dehydration of short chain beta-hydroxyacyl-ACPs and long chain saturated and unsaturated beta-hydroxyacyl-ACPs. This is 3-hydroxyacyl-[acyl-carrier-protein] dehydratase FabZ from Geobacillus thermodenitrificans (strain NG80-2).